The following is a 207-amino-acid chain: MEVDINGDSRSTLTTLPLPVAEGSSPGKAEAEKPRCSSTPCSPMRRTVSGYQILHMDSNYLVGFTTGEELLKLAQKCTGGEDSKGEAMPALRAKQLDTGLARSSRLYKTRSRYYQPYEIPAVNGRRRRRMPSSGDKCTKPLPYEPYKALHGPLPLCLLKGKRAHSKSLDYLNLDKMNIKEPADTEVLQYQLQHLTLRGDRVFARNNT.

The residue at position 1 (M1) is an N-acetylmethionine. A disordered region spans residues 1 to 41 (MEVDINGDSRSTLTTLPLPVAEGSSPGKAEAEKPRCSSTPC). Residues S25 and S167 each carry the phosphoserine modification.

This sequence belongs to the UNC119-binding protein family. In terms of assembly, interacts with UNC119 and UNC119B; interaction preferentially takes place when UNC119 and UNC119B are unliganded with myristoylated proteins. As to expression, highly expressed in photoreceptors.

Its subcellular location is the cytoplasm. It localises to the cell projection. The protein localises to the cilium. Regulates the macrophage function, by enhancing the resolution of inflammation and wound repair functions mediated by M2 macrophages. The regulation of macrophage function is, due at least in part, to its ability to inhibit glycolysis. May also play a role in trafficking of proteins via its interaction with UNC119 and UNC119B cargo adapters: may help the release of UNC119 and UNC119B cargo or the recycling of UNC119 and UNC119B. May play a role in ciliary membrane localization via its interaction with UNC119B and protein transport into photoreceptor cells. The chain is Macrophage immunometabolism regulator from Mus musculus (Mouse).